Here is an 857-residue protein sequence, read N- to C-terminus: MPGTNLTREEARQRATLLTVDSYEIDLDLTGAQEGGTYRSVTTVRFDVAEGGGESFIDLVAPTVHEVTLNGDALDTAEVFQDSRIALPGLLPGRNILRVVADCAYTNTGEGLHRFVDPVDDQAYLYTQFEVPDARRVFASFEQPDLKATFQFTVKAPEGWTVISNSPTPEPKDNVWEFEPTPRISSYVTALIVGPYHSVHSVYEKDGQSVPLGIYCRPSLAEHLDADAIFEVTRQGFDWFQEKFDYAYPFKKYDQLFVPEFNAGAMENAGAVTIRDQYVFRSKVTDAAYEVRAATILHELAHMWFGDLVTMEWWNDLWLNESFATYAEAACQAAAPGSKWPHSWTTFANQMKTWAYRQDQLPSTHPIMADISDLDDVLVNFDGITYAKGASVLKQLVAYVGEEAFFKGVQAYFKRHAFGNTRLSDLLGALEETSGRDLKTWSKAWLETAGINVLRPEIETDADGVITSFAIRQEAPALPAGAKGEPTLRPHRIAIGAYDLDGAGKLVRGDRVELDVDGELTAVPQLVGKARPAVLLLNDDDLSYAKVRLDEQSLAVVTEHLGDFTESLPRALCWASAWDMTRDAELATRDYLALVLSGIGKESDIGVVQSLHRQVKLAIDQYAAPTAREALLTRWTEATLAHLRAAEAGSDHQLAWARAFAATARTPEQLDLLDALLDGTQTIEGLAVDTELRWAFVQRLAAVGRFGGSEIAAEYERDKTAAGERHAATARAARPTEAAKAEAWESVVESDKLPNAVQEAVIAGFVQTDQRELLAAYTERYFEALKDVWASRSHEMAQQIAVGLYPAVQVSQDTLDRTDAWLASAEPNAALRRLVSESRSGIERALRAQAADAAAAE.

Residues glutamate 130 and 264–268 (GAMEN) each bind substrate. Residue histidine 298 participates in Zn(2+) binding. Glutamate 299 (proton acceptor) is an active-site residue. Zn(2+) contacts are provided by histidine 302 and glutamate 321.

The protein belongs to the peptidase M1 family. Monomer. Zn(2+) serves as cofactor. Post-translationally, the N-terminus is blocked.

The protein localises to the cytoplasm. The catalysed reaction is Release of an N-terminal amino acid, Xaa-|-Yaa- from a peptide, amide or arylamide. Xaa is preferably Ala, but may be most amino acids including Pro (slow action). When a terminal hydrophobic residue is followed by a prolyl residue, the two may be released as an intact Xaa-Pro dipeptide.. Functionally, aminopeptidase with broad substrate specificity to several peptides. Shows strong preference for leucine but also cleaves next to Arg and Lys in peptide-bond-containing substrates. This Streptomyces lividans protein is Aminopeptidase N (pepN).